Here is a 1281-residue protein sequence, read N- to C-terminus: Enterobactin synthase component F (1281 aa).

An elongation/condensation region spans residues 1–301 (MSQHLPLVAA…NVLPLGIHIA (301 aa)). The tract at residues 486 to 891 (SYREMHEQVV…ALPDVKQAVT (406 aa)) is adenylation. The Carrier domain maps to 975 to 1050 (APKAGSETII…KLATIIDGEE (76 aa)). Position 1010 is an O-(pantetheine 4'-phosphoryl)serine (serine 1010). The segment at 1070–1281 (PTLFCFHPAS…GPIIRATLNR (212 aa)) is thioesterase. Residue histidine 1259 is the Proton acceptor; for thioesterase activity of the active site.

The protein belongs to the ATP-dependent AMP-binding enzyme family. EntF subfamily. Proteins EntB, EntD, EntE and EntF are the component of the enterobactin synthase. Components probably do not form a stable complex. EntF acts as a catalytic monomer. Requires pantetheine 4'-phosphate as cofactor. In terms of processing, 4'-phosphopantetheine is transferred from CoA to a specific serine of apo-EntF by EntD. Holo-EntF so formed is then acylated with seryl-AMP.

The protein localises to the cytoplasm. It catalyses the reaction 3 2,3-dihydroxybenzoate + 3 L-serine + 6 ATP = enterobactin + 6 AMP + 6 diphosphate + 4 H(+). The enzyme catalyses holo-[peptidyl-carrier protein] + L-serine + ATP = L-seryl-[peptidyl-carrier protein] + AMP + diphosphate. Its pathway is siderophore biosynthesis; enterobactin biosynthesis. Its function is as follows. Involved in the biosynthesis of the siderophore enterobactin (enterochelin), which is a macrocyclic trimeric lactone of N-(2,3-dihydroxybenzoyl)-serine. EntF catalyzes the activation of L-serine via ATP-dependent PPi exchange reaction to form seryladenylate. Activated L-serine is loaded onto the peptidyl carrier domain via a thioester linkage to the phosphopanthetheine moiety, forming seryl-S-Ppant-EntF. EntF acts then as the sole catalyst for the formation of the three amide and three ester linkages found in enterobactin, using seryladenylate and 2,3-dihydroxybenzoate-S-Ppant-EntB (DHB-S-Ppant-EntB) as substrates, via the formation of a DHB-Ser-S-Ppant-EntF intermediate. This is Enterobactin synthase component F (entF) from Shigella flexneri.